Here is a 512-residue protein sequence, read N- to C-terminus: Chitin synthase regulatory factor 2 (512 aa).

6 Sel1-like repeats span residues S224–H260, V261–H296, V297–D333, P337–L377, K378–N414, and P415–H452. C509 is subject to Cysteine methyl ester. C509 is lipidated: S-farnesyl cysteine. Residues I510–S512 constitute a propeptide, removed in mature form.

The protein resides in the membrane. Involved in chitin biosynthesis. The sequence is that of Chitin synthase regulatory factor 2 (chr2) from Schizosaccharomyces pombe (strain 972 / ATCC 24843) (Fission yeast).